A 330-amino-acid polypeptide reads, in one-letter code: Aspartate--ammonia ligase (330 aa).

Belongs to the class-II aminoacyl-tRNA synthetase family. AsnA subfamily.

The protein localises to the cytoplasm. The enzyme catalyses L-aspartate + NH4(+) + ATP = L-asparagine + AMP + diphosphate + H(+). The protein operates within amino-acid biosynthesis; L-asparagine biosynthesis; L-asparagine from L-aspartate (ammonia route): step 1/1. In Serratia proteamaculans (strain 568), this protein is Aspartate--ammonia ligase.